The primary structure comprises 321 residues: Pirin-like protein 2 (321 aa).

Fe cation-binding residues include histidine 88, histidine 90, histidine 132, and glutamate 134.

It belongs to the pirin family. Interacts with RD21A, RD21B and XCP2.

The protein resides in the cytoplasm. It is found in the cytosol. The protein localises to the nucleus. Involved in susceptibility to the bacterial plant pathogen Ralstonia solanacearum. Stabilizes the xylem cysteine protease XCP2 by blocking its autolysis. The polypeptide is Pirin-like protein 2 (Arabidopsis thaliana (Mouse-ear cress)).